Consider the following 864-residue polypeptide: Protein translocase subunit SecA (864 aa).

ATP is bound by residues glutamine 85, 103–107 (GEGKT), and aspartate 542.

Belongs to the SecA family. As to quaternary structure, monomer and homodimer. Part of the essential Sec protein translocation apparatus which comprises SecA, SecYEG and auxiliary proteins SecDF. Other proteins may also be involved.

It localises to the cell inner membrane. It is found in the cytoplasm. The enzyme catalyses ATP + H2O + cellular proteinSide 1 = ADP + phosphate + cellular proteinSide 2.. Its function is as follows. Part of the Sec protein translocase complex. Interacts with the SecYEG preprotein conducting channel. Has a central role in coupling the hydrolysis of ATP to the transfer of proteins into and across the cell membrane, serving as an ATP-driven molecular motor driving the stepwise translocation of polypeptide chains across the membrane. The sequence is that of Protein translocase subunit SecA from Fervidobacterium nodosum (strain ATCC 35602 / DSM 5306 / Rt17-B1).